We begin with the raw amino-acid sequence, 526 residues long: Variant surface glycoprotein MITAT 1.4A (526 aa).

An N-terminal signal peptide occupies residues 1–33 (MDCHTKETLGVTQWRRSTMLTLSLLYAITPADG). Cystine bridges form between cysteine 47/cysteine 173 and cysteine 154/cysteine 215. The tract at residues 157 to 193 (NEGGDGDGKDQLAPKGCRHGTEADFDAGAGPAESEVA) is disordered. An N-linked (GlcNAc...) asparagine glycan is attached at asparagine 453. Aspartate 503 carries GPI-anchor amidated aspartate lipidation. A propeptide spans 504–526 (SSILVTKKFALTVVSAAFVALLF) (removed in mature form).

It localises to the cell membrane. VSG forms a coat on the surface of the parasite. The trypanosome evades the immune response of the host by expressing a series of antigenically distinct VSGs from an estimated 1000 VSG genes. The polypeptide is Variant surface glycoprotein MITAT 1.4A (Trypanosoma brucei brucei).